Consider the following 348-residue polypeptide: MO25-like protein At2g03410 (348 aa).

This sequence belongs to the Mo25 family.

This Arabidopsis thaliana (Mouse-ear cress) protein is MO25-like protein At2g03410.